A 1382-amino-acid polypeptide reads, in one-letter code: DNA-directed RNA polymerase subunit beta' (1382 aa).

Residues C70, C72, C85, and C88 each coordinate Zn(2+). Residues D460, D462, and D464 each coordinate Mg(2+). Residues C808, C882, C889, and C892 each coordinate Zn(2+).

It belongs to the RNA polymerase beta' chain family. In terms of assembly, the RNAP catalytic core consists of 2 alpha, 1 beta, 1 beta' and 1 omega subunit. When a sigma factor is associated with the core the holoenzyme is formed, which can initiate transcription. Mg(2+) serves as cofactor. It depends on Zn(2+) as a cofactor.

It carries out the reaction RNA(n) + a ribonucleoside 5'-triphosphate = RNA(n+1) + diphosphate. Its function is as follows. DNA-dependent RNA polymerase catalyzes the transcription of DNA into RNA using the four ribonucleoside triphosphates as substrates. The sequence is that of DNA-directed RNA polymerase subunit beta' from Geobacter sp. (strain M21).